The sequence spans 563 residues: E3 ubiquitin-protein ligase IpaH2.5 (563 aa).

The segment at 1–270 is interaction with target proteins; the sequence is MIKSTNIQVI…PDYSGPQIFF (270 aa). LRR repeat units lie at residues 69–90, 91–115, 117–130, 131–150, 151–170, 171–195, 197–209, and 210–233; these read LQNQ…PDLP, PQIT…MLKV, HAQF…PALP, ETLE…PFLP, ENLT…PLLP, PELK…KLEG, ALAN…LPEL, and PFSM…VLRL. Positions 271–281 are linker; sequence SMGNSATISAP. The segment at 282-563 is E3 ubiquitin-protein ligase catalytic domain; the sequence is EHSLADAVTA…YRQLTDEVLA (282 aa). The 280-residue stretch at 284–563 folds into the NEL domain; the sequence is SLADAVTAWF…YRQLTDEVLA (280 aa). Cys368 serves as the catalytic Glycyl thioester intermediate.

The protein belongs to the LRR-containing bacterial E3 ligase family. Interacts with human RBCK1/HOIL-1 and RNF31/HOIP components of the LUBAC complex. In terms of processing, ubiquitinated in the presence of host E1 ubiquitin-activating enzyme, E2 ubiquitin-conjugating enzyme and ubiquitin.

Its subcellular location is the secreted. It localises to the host cytoplasm. It catalyses the reaction S-ubiquitinyl-[E2 ubiquitin-conjugating enzyme]-L-cysteine + [acceptor protein]-L-lysine = [E2 ubiquitin-conjugating enzyme]-L-cysteine + N(6)-ubiquitinyl-[acceptor protein]-L-lysine.. It functions in the pathway protein modification; protein ubiquitination. Exists in an autoinhibited state in the absence of substrate protein, probably due to interactions of the leucine-rich repeat domain with the catalytic domain. Is activated upon binding to a substrate protein. Functionally, E3 ubiquitin-protein ligase effector that inhibits host cell innate immunity during bacterial infection by catalyzing 'Lys-48'-linked polyubiquitination and subsequent degradation of host RNF31/HOIP. Host RNF31/HOIP is the catalytic component of the LUBAC complex, which conjugates linear ('Met-1'-linked) polyubiquitin chains at the surface of bacteria invading the host cytosol to form the ubiquitin coat surrounding bacteria. The bacterial ubiquitin coat acts as an 'eat-me' signal for xenophagy and promotes NF-kappa-B activation. The polypeptide is E3 ubiquitin-protein ligase IpaH2.5 (Shigella flexneri).